Here is a 297-residue protein sequence, read N- to C-terminus: Tyrosine recombinase XerC (297 aa).

Positions 1–84 (MEEIQVTFLN…TLRTFYEFWM (84 aa)) constitute a Core-binding (CB) domain. Positions 105-286 (YLPQFFYEEE…SNQQLRKVYL (182 aa)) constitute a Tyr recombinase domain. Active-site residues include R145, K169, H238, R241, and H264. Y273 functions as the O-(3'-phospho-DNA)-tyrosine intermediate in the catalytic mechanism.

Belongs to the 'phage' integrase family. XerC subfamily. Forms a cyclic heterotetrameric complex composed of two molecules of XerC and two molecules of XerD.

The protein resides in the cytoplasm. In terms of biological role, site-specific tyrosine recombinase, which acts by catalyzing the cutting and rejoining of the recombining DNA molecules. The XerC-XerD complex is essential to convert dimers of the bacterial chromosome into monomers to permit their segregation at cell division. It also contributes to the segregational stability of plasmids. The chain is Tyrosine recombinase XerC from Staphylococcus haemolyticus (strain JCSC1435).